The sequence spans 2801 residues: Neurobeachin-like protein 2 (2801 aa).

A disordered region spans residues 1379–1529 (RHEEEYEEEE…TISNTSNPQA (151 aa)). A compositionally biased stretch (acidic residues) spans 1383-1393 (EYEEEEGETQD). Polar residues-rich tracts occupy residues 1400–1413 (DLSQSPPSTGQLKN), 1424–1437 (GDQSSHSSTLSNTV), 1470–1481 (KGPQTPVGSQPE), and 1500–1528 (SSSLSNVLDDTSYSTEPPTDTISNTSNPQ). Positions 1986-2086 (SQKEKLVLSE…VRNKVYSRIL (101 aa)) constitute a BEACH-type PH domain. The 293-residue stretch at 2099 to 2391 (RSPQELLKAS…QLLKEPHPPR (293 aa)) folds into the BEACH domain. WD repeat units follow at residues 2431 to 2468 (LVQAVVPRNQTRSFIIPGSDILVTVSANGMIGTHSWLP), 2492 to 2535 (RFLS…MLGK), 2538 to 2575 (LVGRICRHIDVVTCLALDLCGIYLISGSRDTTCMVWQV), 2588 to 2626 (RPIQVLCGHDQEVTCVAISTELDMAISGSKDGTVIVHSV), 2633 to 2676 (WTLR…RYAL), 2684 to 2719 (TLLASETLDEKISALYLVPDYLIVGTQQGNLHIRDL), and 2727 to 2762 (APLALKVPVRCVSVTKESSHILVGLEDGKLIVVGAG).

It belongs to the WD repeat neurobeachin family.

Its subcellular location is the endoplasmic reticulum. Functionally, involved in thrombopoiesis. Plays a role in the development or secretion of alpha-granules, that contain several growth factors important for platelet biogenesis. The sequence is that of Neurobeachin-like protein 2 (nbeal2) from Danio rerio (Zebrafish).